A 1078-amino-acid chain; its full sequence is Teashirt homolog 1-A (1078 aa).

Disordered stretches follow at residues 1–110 (MPRR…NVSY), 140–197 (KSNE…SNSA), and 271–300 (GHYR…MEME). Positions 26–36 (IEEDNLEDDGL) are enriched in acidic residues. Positions 57-71 (PSYQNSPISSATNQD) are enriched in polar residues. Positions 143-197 (ENSSPTTNTNKSSMSEATGSTSDPDTPTTIPSSSCTNTSTSISVTTSNSTNSNSA) are enriched in low complexity. 2 consecutive C2H2-type zinc fingers follow at residues 248–272 (FKCK…ETGH) and 309–333 (LKCM…KTKH). Residues 271 to 286 (GHYRDDNKDRDAERTK) are compositionally biased toward basic and acidic residues. The disordered stretch occupies residues 365–394 (DSPEQAGISPGASVSESAKDPKAANPYVTP). The C2H2-type 3 zinc-finger motif lies at 418–442 (LKCMECGSSHDSLQQLTAHMMVTGH). 2 disordered regions span residues 472 to 524 (LPPT…ENED) and 850 to 877 (RLTP…EAMD). The segment covering 497-524 (HSEEKKDPEKEKVNNCEVEKRIKEENED) has biased composition (basic and acidic residues). Positions 853-862 (PKSSTPSTVS) are enriched in polar residues. A DNA-binding region (homeobox) is located at residues 885 to 955 (RKGRQSNWNP…NVKYQLRRTG (71 aa)). C2H2-type zinc fingers lie at residues 970 to 992 (FFCN…LETH) and 1038 to 1061 (FQCK…SKTH).

This sequence belongs to the teashirt C2H2-type zinc-finger protein family.

The protein resides in the nucleus. Functionally, probable transcriptional regulator involved in developmental processes. May act as a transcriptional repressor (Potential). Involved in two major neuronal regionalization processes: primary anteroposterior (AP) axis patterning of the CNS and segmentation of the cranial neuronal crest (CNS) development. The chain is Teashirt homolog 1-A (tshz1-a) from Xenopus laevis (African clawed frog).